The following is a 483-amino-acid chain: MDLKELLHGVQAKIYGKVRPLEVRNLTRDSRCVSVGDIFIAHKGQRYDGNDFAVDALANGAIAIASSLYNPFLSVVQIITPNLEELEAELSAKYYEYPSSKLHTIGVTGTNGKTTVTCLIKALLDSYQKPSGLLGTIEHILGEGVIKDGFTTPTPALLQKYLATMVRQNRDAVVMEVSSIGLASGRVAYTNFDTAVLTNITLDHLDFHGTFETYVAAKAKLFSLVPPSGMVVINTDSPYASQCIESAKAPVITYGIESAADYRATDIQLSSSGTKYTLVYGDQKIACSSSFIGKYNVYNLLAAISTVHASLRCDLEDLLEKIGLCQPPPGRLDPVLMGPCPVYIDYAHTPDALDNVLTGLHELLPEGGRLIVVFGCGGDRDRSKRKLMAQVVERYGFAVVTSDNPRSEPPEDIVNEICDGFYSKNYFIEIDRKQAITYALSIASDRDIVLIAGKGHEAYQIFKHQTVAFDDKQTVCEVLASYV.

Ser-30 is a UDP-N-acetyl-alpha-D-muramoyl-L-alanyl-D-glutamate binding site. 109-115 contributes to the ATP binding site; it reads GTNGKTT. UDP-N-acetyl-alpha-D-muramoyl-L-alanyl-D-glutamate contacts are provided by residues 151–152, Ser-178, and Arg-186; that span reads TT. The residue at position 218 (Lys-218) is an N6-carboxylysine. Meso-2,6-diaminopimelate contacts are provided by residues Arg-380, 403-406, Gly-453, and Glu-457; that span reads DNPR. The Meso-diaminopimelate recognition motif signature appears at 403-406; the sequence is DNPR.

Belongs to the MurCDEF family. MurE subfamily. It depends on Mg(2+) as a cofactor. Post-translationally, carboxylation is probably crucial for Mg(2+) binding and, consequently, for the gamma-phosphate positioning of ATP.

It localises to the cytoplasm. The catalysed reaction is UDP-N-acetyl-alpha-D-muramoyl-L-alanyl-D-glutamate + meso-2,6-diaminopimelate + ATP = UDP-N-acetyl-alpha-D-muramoyl-L-alanyl-gamma-D-glutamyl-meso-2,6-diaminopimelate + ADP + phosphate + H(+). It functions in the pathway cell wall biogenesis; peptidoglycan biosynthesis. In terms of biological role, catalyzes the addition of meso-diaminopimelic acid to the nucleotide precursor UDP-N-acetylmuramoyl-L-alanyl-D-glutamate (UMAG) in the biosynthesis of bacterial cell-wall peptidoglycan. This is UDP-N-acetylmuramoyl-L-alanyl-D-glutamate--2,6-diaminopimelate ligase from Chlamydia pneumoniae (Chlamydophila pneumoniae).